The chain runs to 394 residues: MVFQLPTTTAAPTGGATSSFSFGLSTGTPAAAPASGAATTAPATKTTFSFGTPAPTAGIGGGDADNSKAQAPPAFGFGLGSGTASAPLTLGTQAAANPASTTSATATGTSAAPPAFGGFTAQPAASVVPTIATSAPNTAATTTGLLGGSGLGAPKTTAAASTTLTAAPSAIASTQGAAPAPTLSTGGAFANLTTETKTTDSSAVSTASQLSYHQLEEHINKWTLEFEEQEKVFTEQATQINAWDKLLISNNGKIVELNDAVKKVKTDQQVLDQELEFIATQQKELEDSLGPLEKEFVNLPRVDMERSQTYLMVENLDTQLKQMSEDLKEIIDNLNEANKGQDTTDPIIQIGKILNAHMNSLQWIESQSTNISKKLEDIGKIQDSQKRDIFRAPF.

5 repeat units span residues 22 to 23 (FG), 50 to 51 (FG), 75 to 76 (FG), 77 to 78 (FG), and 116 to 117 (FG). Positions 22–117 (FGLSTGTPAA…GTSAAPPAFG (96 aa)) are 5 X 2 AA repeats of F-G. Over residues 45-57 (KTTFSFGTPAPTA) the composition is skewed to low complexity. The segment at 45–73 (KTTFSFGTPAPTAGIGGGDADNSKAQAPP) is disordered. Positions 211-341 (SYHQLEEHIN…DNLNEANKGQ (131 aa)) form a coiled coil.

The protein belongs to the nucleoporin NSP1/NUP62 family. In terms of tissue distribution, expressed in adult male accessory glands (at protein level).

The protein resides in the nucleus. Its subcellular location is the chromosome. It localises to the nucleus envelope. The protein localises to the nuclear pore complex. It is found in the cytoplasm. The protein resides in the cytoskeleton. Its subcellular location is the spindle pole. It localises to the microtubule organizing center. The protein localises to the centrosome. Functionally, essential component of the nuclear pore complex. The N-terminal is probably involved in nucleocytoplasmic transport. The C-terminal is involved in protein-protein interaction probably via coiled-coil formation, promotes its association with centrosomes and may function in anchorage of Nup62 to the pore complex. Binds to transcriptionally active genes. Negatively regulates chromatin attachment to the nuclear envelope, probably by preventing chromatin tethering by Nup154. The polypeptide is Nuclear pore glycoprotein p62 (Drosophila melanogaster (Fruit fly)).